The following is an 82-amino-acid chain: Sec-independent protein translocase protein TatA (82 aa).

The helical transmembrane segment at 1 to 21 (MLGFGPFELILIVVIIALLFG) threads the bilayer. The segment covering 36–47 (IKEFKQEMHEPS) has biased composition (basic and acidic residues). The disordered stretch occupies residues 36-82 (IKEFKQEMHEPSPPRPQVTDIPSQRLDPVTGAPVSTESTVPASDRRS).

The protein belongs to the TatA/E family. As to quaternary structure, forms a complex with TatC.

It is found in the cell membrane. Its function is as follows. Part of the twin-arginine translocation (Tat) system that transports large folded proteins containing a characteristic twin-arginine motif in their signal peptide across membranes. TatA could form the protein-conducting channel of the Tat system. The polypeptide is Sec-independent protein translocase protein TatA (Deinococcus deserti (strain DSM 17065 / CIP 109153 / LMG 22923 / VCD115)).